A 73-amino-acid chain; its full sequence is Large ribosomal subunit protein bL31 (73 aa).

Zn(2+) contacts are provided by cysteine 16, cysteine 18, cysteine 38, and cysteine 41.

It belongs to the bacterial ribosomal protein bL31 family. Type A subfamily. In terms of assembly, part of the 50S ribosomal subunit. Zn(2+) serves as cofactor.

In terms of biological role, binds the 23S rRNA. The polypeptide is Large ribosomal subunit protein bL31 (Vibrio vulnificus (strain CMCP6)).